The primary structure comprises 207 residues: Granulocyte colony-stimulating factor (207 aa).

Residues 1-30 form the signal peptide; it reads MAGPATQSPMKLMALQLLLWHSALWTVQEA. 2 cysteine pairs are disulfide-bonded: Cys-69–Cys-75 and Cys-97–Cys-107. Thr-166 carries an O-linked (GalNAc...) threonine glycan.

It belongs to the IL-6 superfamily. Monomer. In terms of processing, O-glycan consists of Gal-GalNAc disaccharide which can be modified with up to two sialic acid residues (done in recombinantly expressed G-CSF from CHO cells).

It localises to the secreted. In terms of biological role, granulocyte/macrophage colony-stimulating factors are cytokines that act in hematopoiesis by controlling the production, differentiation, and function of 2 related white cell populations of the blood, the granulocytes and the monocytes-macrophages. This CSF induces granulocytes. The polypeptide is Granulocyte colony-stimulating factor (CSF3) (Homo sapiens (Human)).